Here is a 294-residue protein sequence, read N- to C-terminus: MARGREAVTLLLVGWGYAPGMQTLEALDAVRRADVVYVESYTMPGSSWLYKSVVEAAGEARVVEASRRDLEERSREIVSRALDAVVAVVTAGDPMVATTHSSLAAEALEAGVAVRYIPGVSGVQAARGATMLSFYRFGGTVTLPGPWRGVTPISVARRIYLNLCAGLHTTALLDVDERGVQLSPGQGVSLLLEADREYAREAGAPALLARLPSVLVEAGAGGGHRVLYWSSLERLSTADVEGGVYSIVIPARLSGVEEWLLAAASGQRRPLEYDRSVYETVEENCKKGVYMEPV.

S-adenosyl-L-methionine-binding positions include Asp-93, Val-96, 121–122 (SG), Leu-173, and Ala-220.

It belongs to the diphthine synthase family. As to quaternary structure, homodimer.

The catalysed reaction is 2-[(3S)-amino-3-carboxypropyl]-L-histidyl-[translation elongation factor 2] + 3 S-adenosyl-L-methionine = diphthine-[translation elongation factor 2] + 3 S-adenosyl-L-homocysteine + 3 H(+). It participates in protein modification; peptidyl-diphthamide biosynthesis. Functionally, S-adenosyl-L-methionine-dependent methyltransferase that catalyzes the trimethylation of the amino group of the modified target histidine residue in translation elongation factor 2 (EF-2), to form an intermediate called diphthine. The three successive methylation reactions represent the second step of diphthamide biosynthesis. The polypeptide is Diphthine synthase (dphB) (Aeropyrum pernix (strain ATCC 700893 / DSM 11879 / JCM 9820 / NBRC 100138 / K1)).